Consider the following 341-residue polypeptide: Serpentine receptor class beta-1 (341 aa).

Transmembrane regions (helical) follow at residues 22–42, 66–86, 102–122, 141–161, 188–208, 240–260, and 279–299; these read AQFWTFIFSTLAVPALFIFLL, FLFAVVLALTFGYHILVPLFI, GQLSLTLFITLQMIMPFGFSI, LGPLLIFVLIGIDLILLFTVF, CWILLYAELGNLLCNCIILLV, LIVSFTHILFIGWYLGVTIFI, and GVYISVPTYNLTIVFVGIKAL.

The protein belongs to the nematode receptor-like protein srb family.

The protein resides in the membrane. The protein is Serpentine receptor class beta-1 (srb-1) of Caenorhabditis elegans.